The chain runs to 344 residues: Phosphate acyltransferase (344 aa).

The protein belongs to the PlsX family. As to quaternary structure, homodimer. Probably interacts with PlsY.

It is found in the cytoplasm. The enzyme catalyses a fatty acyl-[ACP] + phosphate = an acyl phosphate + holo-[ACP]. The protein operates within lipid metabolism; phospholipid metabolism. In terms of biological role, catalyzes the reversible formation of acyl-phosphate (acyl-PO(4)) from acyl-[acyl-carrier-protein] (acyl-ACP). This enzyme utilizes acyl-ACP as fatty acyl donor, but not acyl-CoA. The sequence is that of Phosphate acyltransferase from Actinobacillus pleuropneumoniae serotype 5b (strain L20).